A 122-amino-acid polypeptide reads, in one-letter code: Cytochrome c-556 (122 aa).

Met11, Cys111, Cys114, and His115 together coordinate heme. Positions 11, 111, 114, and 115 each coordinate heme c.

In terms of assembly, monomer. Post-translationally, binds 1 heme c group covalently per subunit.

Its function is as follows. Low-spin monoheme cytochrome c. The polypeptide is Cytochrome c-556 (Agrobacterium tumefaciens (strain II Chrys)).